A 193-amino-acid chain; its full sequence is Iron-sulfur flavoprotein MJ1083 (193 aa).

The [4Fe-4S] cluster site is built by Cys-47, Cys-50, Cys-53, and Cys-59.

The protein belongs to the SsuE family. Isf subfamily. In terms of assembly, homodimer. It depends on FMN as a cofactor. Requires [4Fe-4S] cluster as cofactor.

Redox-active protein probably involved in electron transport. This is Iron-sulfur flavoprotein MJ1083 from Methanocaldococcus jannaschii (strain ATCC 43067 / DSM 2661 / JAL-1 / JCM 10045 / NBRC 100440) (Methanococcus jannaschii).